A 244-amino-acid polypeptide reads, in one-letter code: Cell division protein ZipA (244 aa).

The Periplasmic portion of the chain corresponds to Met1–Met4. The chain crosses the membrane as a helical span at residues Ala5–Phe25. At Gly26 to Trp244 the chain is on the cytoplasmic side. The interval Lys30 to Arg91 is disordered. Over residues Arg35–Pro50 the composition is skewed to basic and acidic residues.

The protein belongs to the ZipA family. As to quaternary structure, interacts with FtsZ via their C-terminal domains.

The protein localises to the cell inner membrane. Essential cell division protein that stabilizes the FtsZ protofilaments by cross-linking them and that serves as a cytoplasmic membrane anchor for the Z ring. Also required for the recruitment to the septal ring of downstream cell division proteins. This chain is Cell division protein ZipA, found in Xanthomonas campestris pv. campestris (strain ATCC 33913 / DSM 3586 / NCPPB 528 / LMG 568 / P 25).